Here is a 107-residue protein sequence, read N- to C-terminus: ATP synthase subunit c (107 aa).

3 helical membrane-spanning segments follow: residues 4–24 (IVFLMLALSGFAFAAEGSMNQ), 29–49 (FSILAAGLGLGVAALGGAIGM), and 74–94 (MFIALAMIEAQVIYALVIALI).

Belongs to the ATPase C chain family. In terms of assembly, F-type ATPases have 2 components, F(1) - the catalytic core - and F(0) - the membrane proton channel. F(1) has five subunits: alpha(3), beta(3), gamma(1), delta(1), epsilon(1). F(0) has three main subunits: a(1), b(2) and c(10-14). The alpha and beta chains form an alternating ring which encloses part of the gamma chain. F(1) is attached to F(0) by a central stalk formed by the gamma and epsilon chains, while a peripheral stalk is formed by the delta and b chains.

The protein localises to the cell inner membrane. F(1)F(0) ATP synthase produces ATP from ADP in the presence of a proton or sodium gradient. F-type ATPases consist of two structural domains, F(1) containing the extramembraneous catalytic core and F(0) containing the membrane proton channel, linked together by a central stalk and a peripheral stalk. During catalysis, ATP synthesis in the catalytic domain of F(1) is coupled via a rotary mechanism of the central stalk subunits to proton translocation. Functionally, key component of the F(0) channel; it plays a direct role in translocation across the membrane. A homomeric c-ring of between 10-14 subunits forms the central stalk rotor element with the F(1) delta and epsilon subunits. The chain is ATP synthase subunit c from Campylobacter lari (strain RM2100 / D67 / ATCC BAA-1060).